We begin with the raw amino-acid sequence, 359 residues long: Beta-hexosaminidase (359 aa).

Residues Asp-64, Arg-72, Arg-138, and Lys-168–His-169 each bind substrate. His-181 (proton donor/acceptor) is an active-site residue. The Nucleophile role is filled by Asp-252.

This sequence belongs to the glycosyl hydrolase 3 family. NagZ subfamily.

The protein resides in the cytoplasm. The enzyme catalyses Hydrolysis of terminal non-reducing N-acetyl-D-hexosamine residues in N-acetyl-beta-D-hexosaminides.. It functions in the pathway cell wall biogenesis; peptidoglycan recycling. Its function is as follows. Plays a role in peptidoglycan recycling by cleaving the terminal beta-1,4-linked N-acetylglucosamine (GlcNAc) from peptide-linked peptidoglycan fragments, giving rise to free GlcNAc, anhydro-N-acetylmuramic acid and anhydro-N-acetylmuramic acid-linked peptides. This is Beta-hexosaminidase from Thiobacillus denitrificans (strain ATCC 25259 / T1).